Consider the following 388-residue polypeptide: tRNA-specific adenosine deaminase 1 (388 aa).

An A to I editase domain is found at 63 to 388 (CLATGVKCTP…PNGGNEFQWI (326 aa)). His89 lines the Zn(2+) pocket. Glu91 (proton donor) is an active-site residue. A 1D-myo-inositol hexakisphosphate-binding site is contributed by Arg96. Zn(2+)-binding residues include Cys144 and Cys201. 1D-myo-inositol hexakisphosphate is bound by residues Lys204, Lys357, and Arg363.

This sequence belongs to the ADAT1 family. It depends on 1D-myo-inositol hexakisphosphate as a cofactor. Requires Zn(2+) as cofactor.

The protein localises to the cytoplasm. The protein resides in the nucleus. The catalysed reaction is adenosine(37) in tRNA(Ala) + H2O + H(+) = inosine(37) in tRNA(Ala) + NH4(+). Functionally, deaminates adenosine-37 to inosine in tRNA-Ala. The sequence is that of tRNA-specific adenosine deaminase 1 from Schizosaccharomyces pombe (strain 972 / ATCC 24843) (Fission yeast).